We begin with the raw amino-acid sequence, 306 residues long: Curved DNA-binding protein (306 aa).

Residues 5 to 69 (DYYAIMGVKP…QRRAEYDQMW (65 aa)) form the J domain.

The protein resides in the cytoplasm. It is found in the nucleoid. DNA-binding protein that preferentially recognizes a curved DNA sequence. It is probably a functional analog of DnaJ; displays overlapping activities with DnaJ, but functions under different conditions, probably acting as a molecular chaperone in an adaptive response to environmental stresses other than heat shock. Lacks autonomous chaperone activity; binds native substrates and targets them for recognition by DnaK. Its activity is inhibited by the binding of CbpM. This is Curved DNA-binding protein from Shigella flexneri.